The following is a 400-amino-acid chain: MASEKPLAAVTCTAPVNIAVIKYWGKRDEELVLPINSSLSVTLHQDQLKTTTTAVISKDFTEDRIWLNGREEDVGQPRLQACLREIRCLARKRRNSRDGDPLPSSLSCKVHVASVNNFPTAAGLASSAAGYACLAYTLARVYGVESDLSEVARRGSGSACRSLYGGFVEWQMGEQADGKDSIARQVAPESHWPELRVLILVVSAEKKLTGSTVGMRASVETSPLLRFRAESVVPARMAEMARCIRERDFPSFAQLTMKDSNQFHATCLDTFPPISYLNAISWRIIHLVHRFNAHHGDTKVAYTFDAGPNAVIFTLDDTVAEFVAAVWHGFPPGSNGDTFLKGLQVRPAPLSAELQAALAMEPTPGGVKYIIVTQVGPGPQILDDPCAHLLGPDGLPKPAA.

Ala-2 is modified (N-acetylalanine). (R)-5-diphosphomevalonate contacts are provided by residues 23 to 26 and Arg-78; that span reads YWGK. Ser-96 is subject to Phosphoserine. Residues 156–161 and Thr-212 contribute to the (R)-5-diphosphomevalonate site; that span reads SGSACR.

The protein belongs to the diphosphomevalonate decarboxylase family. Homodimer. As to expression, expressed in heart, skeletal muscle, lung, liver, brain, pancreas, kidney and placenta.

The protein localises to the cytoplasm. It catalyses the reaction (R)-5-diphosphomevalonate + ATP = isopentenyl diphosphate + ADP + phosphate + CO2. Its pathway is steroid biosynthesis; cholesterol biosynthesis. Functionally, catalyzes the ATP dependent decarboxylation of (R)-5-diphosphomevalonate to form isopentenyl diphosphate (IPP). Functions in the mevalonate (MVA) pathway leading to isopentenyl diphosphate (IPP), a key precursor for the biosynthesis of isoprenoids and sterol synthesis. This is Diphosphomevalonate decarboxylase (MVD) from Homo sapiens (Human).